Reading from the N-terminus, the 444-residue chain is Protein EVI2B (444 aa).

A signal peptide spans 1 to 23; sequence MEFKYLVFIVLCQYLDNTFFSET. At 24-203 the chain is on the extracellular side; it reads EAITTEQQSL…GTAHKNNHNA (180 aa). Asn63, Asn94, Asn104, and Asn127 each carry an N-linked (GlcNAc...) asparagine glycan. 2 stretches are compositionally biased toward polar residues: residues 104–131 and 160–171; these read NNSL…STGQ and THNQPTKSTPTI. Positions 104-197 are disordered; sequence NNSLPQTSPS…EPPSGKGTAH (94 aa). Positions 177–187 are enriched in pro residues; it reads TPPPPPPPLTS. Residues 204-224 form a helical membrane-spanning segment; the sequence is IAAILIGTIIISMLVAILMII. Topologically, residues 225–444 are cytoplasmic; the sequence is LWKYLRKPVL…SLPPPPTELL (220 aa). Thr250 is modified (phosphothreonine). Phosphoserine occurs at positions 269, 272, 279, and 295. 2 stretches are compositionally biased toward polar residues: residues 318 to 332 and 361 to 370; these read SEDS…TAVS and SPLPNDSINP. Disordered stretches follow at residues 318–337 and 361–444; these read SEDS…DDAD and SPLP…TELL.

Expressed in myeloid and lymphoid progenitors and increased in mature hematopoietic populations with the highest levels in granulocytes.

The protein resides in the membrane. Its function is as follows. Required for granulocyte differentiation and functionality of hematopoietic progenitor cells through the control of cell cycle progression and survival of hematopoietic progenitor cells. The chain is Protein EVI2B from Mus musculus (Mouse).